We begin with the raw amino-acid sequence, 506 residues long: Maturase K (506 aa).

The protein belongs to the intron maturase 2 family. MatK subfamily.

The protein localises to the plastid. It localises to the chloroplast. Its function is as follows. Usually encoded in the trnK tRNA gene intron. Probably assists in splicing its own and other chloroplast group II introns. In Mimosa pudica (Sensitive plant), this protein is Maturase K.